Reading from the N-terminus, the 183-residue chain is Protein GrpE (183 aa).

The span at 1–14 (MSNEENKINEEALK) shows a compositional bias: basic and acidic residues. Residues 1 to 20 (MSNEENKINEEALKQQDAAE) form a disordered region.

It belongs to the GrpE family. Homodimer.

The protein localises to the cytoplasm. Participates actively in the response to hyperosmotic and heat shock by preventing the aggregation of stress-denatured proteins, in association with DnaK and GrpE. It is the nucleotide exchange factor for DnaK and may function as a thermosensor. Unfolded proteins bind initially to DnaJ; upon interaction with the DnaJ-bound protein, DnaK hydrolyzes its bound ATP, resulting in the formation of a stable complex. GrpE releases ADP from DnaK; ATP binding to DnaK triggers the release of the substrate protein, thus completing the reaction cycle. Several rounds of ATP-dependent interactions between DnaJ, DnaK and GrpE are required for fully efficient folding. The sequence is that of Protein GrpE from Vibrio vulnificus (strain CMCP6).